Here is a 404-residue protein sequence, read N- to C-terminus: MILDATPIITSLLDTDAYKLHMQQAVYHHYSDIPVVAEFRCRSDERLGEYATTLRHQVDMMADLSLTNEEFGYLQSLPFFKNDYLQWFKHFRFKPEQVHIATTADNQLTIKITGPWREVILWEVPLLALVSEIVHRARSPQITADDAVIQLRKLIDIFYRDAAEQQIDLADFKLMDFGTRRRFSYDVQRAIVDELKNHFPYLIGTSNYHFAERMQLAPVGTQAHEWFQAHQQISPELANSQRAALQSWLDEYPDQLGIALTDCITMDAFLRDFDMPFASRYQGLRHDSGDPIEWGEKAIAHYEKLGIDPMSKVLVFSDSLDFQKALVLYKHFHKRIRLIFGIGTRLTCNIPNITPLNIVIKLVECNGKPVAKLSDSPGKTICEDDEFVDKLRKAFDVPLVRQAC.

Position 224 is a phosphohistidine; by autocatalysis (histidine 224).

This sequence belongs to the NAPRTase family. Transiently phosphorylated on a His residue during the reaction cycle. Phosphorylation strongly increases the affinity for substrates and increases the rate of nicotinate D-ribonucleotide production. Dephosphorylation regenerates the low-affinity form of the enzyme, leading to product release.

The enzyme catalyses nicotinate + 5-phospho-alpha-D-ribose 1-diphosphate + ATP + H2O = nicotinate beta-D-ribonucleotide + ADP + phosphate + diphosphate. It participates in cofactor biosynthesis; NAD(+) biosynthesis; nicotinate D-ribonucleotide from nicotinate: step 1/1. Catalyzes the synthesis of beta-nicotinate D-ribonucleotide from nicotinate and 5-phospho-D-ribose 1-phosphate at the expense of ATP. The chain is Nicotinate phosphoribosyltransferase from Proteus mirabilis (strain HI4320).